Here is a 130-residue protein sequence, read N- to C-terminus: Ribonuclease P protein component 2 (130 aa).

It belongs to the eukaryotic/archaeal RNase P protein component 2 family. Consists of a catalytic RNA component and at least 4-5 protein subunits.

It localises to the cytoplasm. The enzyme catalyses Endonucleolytic cleavage of RNA, removing 5'-extranucleotides from tRNA precursor.. Functionally, part of ribonuclease P, a protein complex that generates mature tRNA molecules by cleaving their 5'-ends. This is Ribonuclease P protein component 2 from Methanococcus maripaludis (strain C6 / ATCC BAA-1332).